The chain runs to 317 residues: Beta-ketoacyl-[acyl-carrier-protein] synthase III (317 aa).

Catalysis depends on residues Cys112 and His244. The interval 245 to 249 (QANLR) is ACP-binding. Residue Asn274 is part of the active site.

This sequence belongs to the thiolase-like superfamily. FabH family. In terms of assembly, homodimer.

It is found in the cytoplasm. It catalyses the reaction malonyl-[ACP] + acetyl-CoA + H(+) = 3-oxobutanoyl-[ACP] + CO2 + CoA. It functions in the pathway lipid metabolism; fatty acid biosynthesis. Catalyzes the condensation reaction of fatty acid synthesis by the addition to an acyl acceptor of two carbons from malonyl-ACP. Catalyzes the first condensation reaction which initiates fatty acid synthesis and may therefore play a role in governing the total rate of fatty acid production. Possesses both acetoacetyl-ACP synthase and acetyl transacylase activities. Its substrate specificity determines the biosynthesis of branched-chain and/or straight-chain of fatty acids. The protein is Beta-ketoacyl-[acyl-carrier-protein] synthase III of Salmonella arizonae (strain ATCC BAA-731 / CDC346-86 / RSK2980).